Consider the following 207-residue polypeptide: MNAMVLDDVIKSQAGYLNPYILEERQLNVTQLDVFSRLMMDRIIFLGTQIDDYTANTLQAQLLYLDSVDPGKDISIYINSPGGSVYAGLGIYDTMQFISSDVATICTGMAASMASVLLVAGAKGKRSALPHSRVMIHQPMGGAQGQASDIEITAREIQKLKKELYTIIADHSGTSFDKVWADSDRDYWMTAQEAKEYGMIDEVLIKK.

The Nucleophile role is filled by S112. H137 is an active-site residue.

Belongs to the peptidase S14 family. In terms of assembly, fourteen ClpP subunits assemble into 2 heptameric rings which stack back to back to give a disk-like structure with a central cavity, resembling the structure of eukaryotic proteasomes.

The protein localises to the cytoplasm. The catalysed reaction is Hydrolysis of proteins to small peptides in the presence of ATP and magnesium. alpha-casein is the usual test substrate. In the absence of ATP, only oligopeptides shorter than five residues are hydrolyzed (such as succinyl-Leu-Tyr-|-NHMec, and Leu-Tyr-Leu-|-Tyr-Trp, in which cleavage of the -Tyr-|-Leu- and -Tyr-|-Trp bonds also occurs).. Functionally, cleaves peptides in various proteins in a process that requires ATP hydrolysis. Has a chymotrypsin-like activity. Plays a major role in the degradation of misfolded proteins. The polypeptide is ATP-dependent Clp protease proteolytic subunit (Bacteroides fragilis (strain ATCC 25285 / DSM 2151 / CCUG 4856 / JCM 11019 / LMG 10263 / NCTC 9343 / Onslow / VPI 2553 / EN-2)).